A 92-amino-acid polypeptide reads, in one-letter code: UPF0250 protein COSY_0496 (92 aa).

Belongs to the UPF0250 family.

The chain is UPF0250 protein COSY_0496 from Vesicomyosocius okutanii subsp. Calyptogena okutanii (strain HA).